The following is a 600-amino-acid chain: Forkhead box protein O (600 aa).

A Phosphothreonine; by PKB/AKT1 modification is found at Thr-49. Phosphoserine is present on Ser-80. The segment at residues Trp-100–Gly-206 is a DNA-binding region (fork-head). Disordered regions lie at residues Lys-187 to Lys-210, Gly-222 to Asp-283, Gln-319 to Tyr-364, and Leu-580 to His-600. Ser-195 is modified (phosphoserine; by PKB/AKT1). Composition is skewed to polar residues over residues Ala-226–Ser-235 and Arg-261–Gly-270. Ser-264 is modified (phosphoserine; by PKB/AKT1). Phosphoserine is present on residues Ser-267, Ser-268, and Ser-273. The span at Thr-330–Pro-342 shows a compositional bias: pro residues. A compositionally biased stretch (low complexity) spans Gln-343–Pro-354.

Interacts with melt.

It is found in the cytoplasm. Its subcellular location is the nucleus. In terms of biological role, transcription factor involved in the regulation of the insulin signaling pathway. Consistently activates both the downstream target Thor\d4EBP and the feedback control target InR. Involved in negative regulation of the cell cycle, modulating cell growth and proliferation. In response to cellular stresses, such as nutrient deprivation or increased levels of reactive oxygen species, foxo is activated and inhibits growth through the action of target genes such as Thor. Foxo activated in the adult fat body can regulate lifespan in adults; an insulin peptide itself may function as one secondary messenger of insulin-regulated aging. Also regulates Lip4, homolog of human acid lipases, thereby acting as a key modulator of lipid metabolism by insulin signaling and integrates insulin responses to glucose and lipid homeostasis. The chain is Forkhead box protein O from Drosophila ananassae (Fruit fly).